We begin with the raw amino-acid sequence, 358 residues long: Dynein axonemal assembly factor 10 (358 aa).

WD repeat units lie at residues 64 to 106, 116 to 155, 163 to 206, 208 to 250, 258 to 298, and 320 to 358; these read EKSK…SPVY, NAIDGVGGLGIGDGAPEIVTGSRDGTVKVWDSRQKDTPVV, ETKR…LRWE, NIRN…PSKG, AHKS…QRSK, and LSTQPISSLDWSPDKQGLCVCSSFDQSVRVLIVTKLNTV.

Interacts with PIH1D1; the interaction associates DNAAF10 with the R2TP complex. Interacts with several dynein axonemal assembly factors.

It is found in the dynein axonemal particle. In terms of biological role, key assembly factor specifically required for the stability of axonemal dynein heavy chains in cytoplasm. The sequence is that of Dynein axonemal assembly factor 10 (dnaaf10) from Danio rerio (Zebrafish).